A 123-amino-acid polypeptide reads, in one-letter code: Large ribosomal subunit protein uL14 (123 aa).

This sequence belongs to the universal ribosomal protein uL14 family. As to quaternary structure, part of the 50S ribosomal subunit. Forms a cluster with proteins L3 and L19. In the 70S ribosome, L14 and L19 interact and together make contacts with the 16S rRNA in bridges B5 and B8.

Functionally, binds to 23S rRNA. Forms part of two intersubunit bridges in the 70S ribosome. In Escherichia coli O6:K15:H31 (strain 536 / UPEC), this protein is Large ribosomal subunit protein uL14.